The following is a 267-amino-acid chain: Tryptophan synthase alpha chain (267 aa).

Active-site proton acceptor residues include E44 and D55.

The protein belongs to the TrpA family. As to quaternary structure, tetramer of two alpha and two beta chains.

The enzyme catalyses (1S,2R)-1-C-(indol-3-yl)glycerol 3-phosphate + L-serine = D-glyceraldehyde 3-phosphate + L-tryptophan + H2O. The protein operates within amino-acid biosynthesis; L-tryptophan biosynthesis; L-tryptophan from chorismate: step 5/5. The alpha subunit is responsible for the aldol cleavage of indoleglycerol phosphate to indole and glyceraldehyde 3-phosphate. The protein is Tryptophan synthase alpha chain of Coxiella burnetii (strain Dugway 5J108-111).